We begin with the raw amino-acid sequence, 98 residues long: Aspartyl/glutamyl-tRNA(Asn/Gln) amidotransferase subunit C (98 aa).

Belongs to the GatC family. In terms of assembly, heterotrimer of A, B and C subunits.

It carries out the reaction L-glutamyl-tRNA(Gln) + L-glutamine + ATP + H2O = L-glutaminyl-tRNA(Gln) + L-glutamate + ADP + phosphate + H(+). The catalysed reaction is L-aspartyl-tRNA(Asn) + L-glutamine + ATP + H2O = L-asparaginyl-tRNA(Asn) + L-glutamate + ADP + phosphate + 2 H(+). Its function is as follows. Allows the formation of correctly charged Asn-tRNA(Asn) or Gln-tRNA(Gln) through the transamidation of misacylated Asp-tRNA(Asn) or Glu-tRNA(Gln) in organisms which lack either or both of asparaginyl-tRNA or glutaminyl-tRNA synthetases. The reaction takes place in the presence of glutamine and ATP through an activated phospho-Asp-tRNA(Asn) or phospho-Glu-tRNA(Gln). This is Aspartyl/glutamyl-tRNA(Asn/Gln) amidotransferase subunit C from Microcystis aeruginosa (strain NIES-843 / IAM M-2473).